The following is a 453-amino-acid chain: Dihydrolipoyllysine-residue succinyltransferase component of 2-oxoglutarate dehydrogenase complex, mitochondrial (453 aa).

The transit peptide at 1 to 67 (MLSRSRCVSR…RFFRTTAVCK (67 aa)) directs the protein to the mitochondrion. The region spanning 70–144 (LVTVKTPAFA…EGGTPLFTLR (75 aa)) is the Lipoyl-binding domain. S81 bears the Phosphoserine mark. The residue at position 110 (K110) is an N6-lipoyllysine. The segment covering 152-172 (KAKPAEAPAAAAPKAEPTAAA) has biased composition (low complexity). Positions 152-225 (KAKPAEAPAA…GKGLRSEHRE (74 aa)) are disordered. Residue K154 is modified to N6-acetyllysine. Positions 173 to 196 (VPPPAAPIPTQMPPVPSPSQPPSG) are enriched in pro residues. An N6-acetyllysine mark is found at K267, K272, K273, K277, and K307. Catalysis depends on residues H424 and D428.

The protein belongs to the 2-oxoacid dehydrogenase family. In terms of assembly, the 2-oxoglutarate dehydrogenase complex is composed of OGDH (2-oxoglutarate dehydrogenase; E1), DLST (dihydrolipoamide succinyltransferase; E2), DLD (dihydrolipoamide dehydrogenase; E3) and the assembly factor KGD4. It contains multiple copies of the three enzymatic components (E1, E2 and E3). In the nucleus, the 2-oxoglutarate dehydrogenase complex associates with KAT2A. Interacts with ABHD11; this interaction maintains the functional lipoylation of the 2-oxoglutarate dehydrogenase complex. It depends on (R)-lipoate as a cofactor.

It is found in the mitochondrion matrix. The protein localises to the nucleus. The enzyme catalyses N(6)-[(R)-dihydrolipoyl]-L-lysyl-[protein] + succinyl-CoA = N(6)-[(R)-S(8)-succinyldihydrolipoyl]-L-lysyl-[protein] + CoA. It participates in amino-acid degradation; L-lysine degradation via saccharopine pathway; glutaryl-CoA from L-lysine: step 6/6. It functions in the pathway carbohydrate metabolism; tricarboxylic acid cycle. In terms of biological role, dihydrolipoamide succinyltransferase (E2) component of the 2-oxoglutarate dehydrogenase complex. The 2-oxoglutarate dehydrogenase complex catalyzes the overall conversion of 2-oxoglutarate to succinyl-CoA and CO(2). The 2-oxoglutarate dehydrogenase complex is mainly active in the mitochondrion. A fraction of the 2-oxoglutarate dehydrogenase complex also localizes in the nucleus and is required for lysine succinylation of histones: associates with KAT2A on chromatin and provides succinyl-CoA to histone succinyltransferase KAT2A. This Homo sapiens (Human) protein is Dihydrolipoyllysine-residue succinyltransferase component of 2-oxoglutarate dehydrogenase complex, mitochondrial.